Consider the following 473-residue polypeptide: Serine carboxypeptidase-like 42 (473 aa).

A signal peptide spans 1-26 (MASVSWRAVAVAMVVVLLSLQWFAKG). Disulfide bonds link cysteine 87–cysteine 346, cysteine 247–cysteine 264, and cysteine 289–cysteine 314. N-linked (GlcNAc...) asparagine glycosylation occurs at asparagine 138. The active site involves serine 179. The N-linked (GlcNAc...) asparagine glycan is linked to asparagine 259. Asparagine 335 and asparagine 351 each carry an N-linked (GlcNAc...) asparagine glycan. Residues aspartate 383 and histidine 440 contribute to the active site. N-linked (GlcNAc...) asparagine glycosylation is present at asparagine 465.

This sequence belongs to the peptidase S10 family. Expression not detected.

It is found in the secreted. In terms of biological role, probable carboxypeptidase. The sequence is that of Serine carboxypeptidase-like 42 (SCPL42) from Arabidopsis thaliana (Mouse-ear cress).